A 586-amino-acid polypeptide reads, in one-letter code: Solute carrier family 13 member 2 (586 aa).

The next 3 helical transmembrane spans lie at Ser-13–Thr-33, Ala-53–Met-73, and Thr-86–His-106. Over residues Asp-165–Phe-175 the composition is skewed to polar residues. Residues Asp-165–His-209 form a disordered region. Transmembrane regions (helical) follow at residues Gly-215 to Thr-235, Phe-264 to Phe-284, Pro-319 to Phe-339, Gly-366 to Leu-386, Thr-407 to Ala-427, Pro-445 to Phe-465, Phe-478 to Leu-498, Leu-506 to Leu-526, and Gly-535 to Ile-555.

The protein belongs to the SLC13A/DASS transporter (TC 2.A.47) family. NADC subfamily. Highly expressed in kidney and small intestine. Not detectable in brain, heart, stomach and skeletal muscle.

Its subcellular location is the apical cell membrane. The enzyme catalyses succinate(out) + 3 Na(+)(out) = succinate(in) + 3 Na(+)(in). It carries out the reaction fumarate(out) + 3 Na(+)(out) = fumarate(in) + 3 Na(+)(in). It catalyses the reaction 2-oxoglutarate(out) + 3 Na(+)(out) = 2-oxoglutarate(in) + 3 Na(+)(in). With respect to regulation, li(+) decreases succinate transport in the presence of Na(+), by competing at one of the three cation binding sites. Its function is as follows. Low-affinity sodium-dicarboxylate cotransporter, that mediates the entry of citric acid cycle intermediates, such as succinate, citrate, fumarate and alpha-ketoglutarate (2-oxoglutarate) into the small intestine and renal proximal tubule. Can transport citrate in a Na(+)-dependent manner, recognizing the divalent form of citrate rather than the trivalent form which is normally found in blood. Transports the dicarboxylate into the cell with a probable stoichiometry of 3 Na(+) for 1 divalent dicarboxylate, rendering the process electrogenic. Has a critical role in renal dicarboxylate transport. The sequence is that of Solute carrier family 13 member 2 (Slc13a2) from Mus musculus (Mouse).